The primary structure comprises 281 residues: Pantothenate synthetase (281 aa).

30–37 (MGALHRGH) is an ATP binding site. H37 serves as the catalytic Proton donor. Residue Q61 participates in (R)-pantoate binding. Residue Q61 coordinates beta-alanine. Position 147-150 (147-150 (GEKD)) interacts with ATP. Q153 is a binding site for (R)-pantoate. ATP-binding positions include I176 and 184–187 (LSSR).

Belongs to the pantothenate synthetase family. Homodimer.

It localises to the cytoplasm. The catalysed reaction is (R)-pantoate + beta-alanine + ATP = (R)-pantothenate + AMP + diphosphate + H(+). Its pathway is cofactor biosynthesis; (R)-pantothenate biosynthesis; (R)-pantothenate from (R)-pantoate and beta-alanine: step 1/1. In terms of biological role, catalyzes the condensation of pantoate with beta-alanine in an ATP-dependent reaction via a pantoyl-adenylate intermediate. The polypeptide is Pantothenate synthetase (Porphyromonas gingivalis (strain ATCC 33277 / DSM 20709 / CIP 103683 / JCM 12257 / NCTC 11834 / 2561)).